The following is a 507-amino-acid chain: ATP synthase subunit alpha, chloroplastic (507 aa).

Residue 170 to 177 (GDRQTGKT) participates in ATP binding.

It belongs to the ATPase alpha/beta chains family. In terms of assembly, F-type ATPases have 2 components, CF(1) - the catalytic core - and CF(0) - the membrane proton channel. CF(1) has five subunits: alpha(3), beta(3), gamma(1), delta(1), epsilon(1). CF(0) has four main subunits: a, b, b' and c.

It is found in the plastid. The protein localises to the chloroplast thylakoid membrane. It carries out the reaction ATP + H2O + 4 H(+)(in) = ADP + phosphate + 5 H(+)(out). Its function is as follows. Produces ATP from ADP in the presence of a proton gradient across the membrane. The alpha chain is a regulatory subunit. This Huperzia lucidula (Shining clubmoss) protein is ATP synthase subunit alpha, chloroplastic.